Here is a 433-residue protein sequence, read N- to C-terminus: Adenylosuccinate synthetase (433 aa).

GTP-binding positions include 11 to 17 (GDEGKGK) and 39 to 41 (GHT). The active-site Proton acceptor is D12. Mg(2+) is bound by residues D12 and G39. IMP-binding positions include 12 to 15 (DEGK), 37 to 40 (NAGH), T134, R148, N230, T245, and R309. The active-site Proton donor is H40. 305-311 (VTTGRKR) contacts substrate. GTP contacts are provided by residues R311, 337-339 (KLD), and 419-421 (GTG).

Belongs to the adenylosuccinate synthetase family. In terms of assembly, homodimer. It depends on Mg(2+) as a cofactor.

Its subcellular location is the cytoplasm. The catalysed reaction is IMP + L-aspartate + GTP = N(6)-(1,2-dicarboxyethyl)-AMP + GDP + phosphate + 2 H(+). The protein operates within purine metabolism; AMP biosynthesis via de novo pathway; AMP from IMP: step 1/2. Functionally, plays an important role in the de novo pathway and in the salvage pathway of purine nucleotide biosynthesis. Catalyzes the first committed step in the biosynthesis of AMP from IMP. The protein is Adenylosuccinate synthetase of Saccharomyces cerevisiae (strain JAY291) (Baker's yeast).